The following is a 446-amino-acid chain: Scytalone dehydratase-like protein Arp1 (446 aa).

Tyr-323 contacts substrate. Catalysis depends on residues His-358 and His-383. Asn-404 lines the substrate pocket.

It belongs to the scytalone dehydratase family. As to quaternary structure, homotrimer. Each subunit contains an active site, located in the central part of the hydrophobic core of the monomer, which functions independently.

Its function is as follows. Scytalone dehydratase-like protein; part of the Pks2 gene cluster that mediates the formation of infectious structures (appressoria), enabling these fungi to kill insects faster. The product of the Pks2 gene cluster is different from the one of Pks1 and has still not been identified. In Metarhizium acridum (strain CQMa 102), this protein is Scytalone dehydratase-like protein Arp1.